The chain runs to 1079 residues: Eukaryotic translation initiation factor 5B (1079 aa).

A disordered region spans residues 1-478; that stretch reads MGKKGKKSGY…QAAPAESNVS (478 aa). Positions 22 to 38 are enriched in polar residues; the sequence is SGQNEYLDNTSQDSPQN. Residues 57–67 are compositionally biased toward basic residues; sequence SKKKKGKKNKG. Residues Ser-73, Ser-77, and Ser-82 each carry the phosphoserine modification. Basic residues predominate over residues 105–114; the sequence is KKGKKGKKSK. Ser-127 is modified (phosphoserine). Low complexity predominate over residues 160–169; that stretch reads NNNESEAAAP. The segment covering 173-192 has biased composition (basic and acidic residues); that stretch reads PEVRVKTKKEKEREKKEREK. Residues 193–204 are compositionally biased toward basic residues; it reads LRKKQQQAKKKG. The span at 207–233 shows a compositional bias: polar residues; the sequence is GEDTLASSEVSSEVDISTPAENDSSAK. Basic and acidic residues predominate over residues 253–293; the sequence is MLEEKRAREEEEQRIREEEARIAEEEKRLAEVEEARKEEAR. Low complexity-rich tracts occupy residues 321–334 and 361–376; these read QQAL…QMLE and RSGT…LESS. Residue Thr-364 is modified to Phosphothreonine. Residues 385-408 show a composition bias toward basic and acidic residues; the sequence is EPQKDSKDDSEKVEKETEVERKEE. Over residues 409–431 the composition is skewed to acidic residues; that stretch reads NEAEAEAVFDDWEAALEEPEVAE. A compositionally biased stretch (basic and acidic residues) spans 436-466; that stretch reads VTEKKETDIKSDAVEHSIKDKEDSKTDKVDD. Residues 482-700 form the tr-type G domain; sequence LRSPICCILG…LISLTQTRMS (219 aa). The segment at 491–498 is G1; sequence GHVDTGKT. A GTP-binding site is contributed by 491–498; that stretch reads GHVDTGKT. Residues 516–520 form a G2 region; the sequence is GITQQ. Residues 555-558 are G3; it reads DTPG. The G4 stretch occupies residues 609–612; that stretch reads NKVD. Residues 677-679 are G5; sequence SAQ.

Belongs to the TRAFAC class translation factor GTPase superfamily. Classic translation factor GTPase family. IF-2 subfamily. Requires a monovalent cation as cofactor.

It localises to the cytoplasm. It catalyses the reaction GTP + H2O = GDP + phosphate + H(+). Functionally, plays a role in translation initiation. Translational GTPase that catalyzes the joining of the 40S and 60S subunits to form the 80S initiation complex with the initiator methionine-tRNA in the P-site base paired to the start codon. GTP binding and hydrolysis induces conformational changes in the enzyme that renders it active for productive interactions with the ribosome. The release of the enzyme after formation of the initiation complex is a prerequisite to form elongation-competent ribosomes. The protein is Eukaryotic translation initiation factor 5B of Schizosaccharomyces pombe (strain 972 / ATCC 24843) (Fission yeast).